The following is a 729-amino-acid chain: MPKNSKVVKRDLDDDVIESVKDLLSNEDSVEEVSKKSELIVDVQEEKDTDAEDGSEADDERPAWNSKLQYILAQVGFSVGLGNVWRFPYLCQKNGGGAYLLPYLILLLVIGIPLFFLELSVGQRIRRGSIGVWNYISPKLGGIGFASCVVCYFVALYYNVIIGWTLFYFSQSFQQPLPWDQCPLVKNASHTYVEPECEQSSATTYYWYREALDITSSISDSGGLNWKMTVCLLVAWVMVCLAMIKGIQSSGKIMYFSSLFPYVVLICFLIRSLLLNGSIDGIRHMFTPKLEMMLEPKVWREAATQVFFALGLGFGGVIAFSSYNKRDNNCHFDAVLVSFINFFTSVLATLVVFAVLGFKANIVNEKCISQNSEMILKLLKMGNISWDVIPHHINLSAVTVEDYRLVYDIIQKVKEEEFAVLHLNACQIEDELNKAVQGTGLAFIAFTEAMTHFPASPFWSVMFFLMLINLGLGSMFGTIEGIITPIVDTFKVRKEILTVICCLLAFCIGLIFVQRSGNYFVTMFDDYSATLPLLIVVILENIAVSFVYGIDKFIEDLTDMLGFAPSKYYYYMWKYISPLMLLTLLIASIVNMGLSPPGYNAWIKEKASEEFLSYPMWGMVVCFSLMVLAILPVPVVFIIRRCNLIDDSSGNLASVTYKRGRVLKEPVNLEGDDASLIHGKIPSEMSSPNFGKNIYRKQSGSPTLDTAPNGRYGIGYLMADMPDMPESDL.

The Cytoplasmic portion of the chain corresponds to Met-1 to Gln-69. Ser-25 and Ser-55 each carry phosphoserine. Positions Asp-42–Arg-61 are disordered. Acidic residues predominate over residues Val-43 to Asp-59. The next 3 helical transmembrane spans lie at Tyr-70–Leu-90, Ala-98–Leu-117, and Gly-142–Ile-162. Over Gly-163–Asn-225 the chain is Extracellular. An N-linked (GlcNAc...) asparagine glycan is attached at Asn-187. 2 consecutive transmembrane segments (helical) span residues Trp-226 to Ile-244 and Ile-253 to Ile-270. The N-linked (GlcNAc...) asparagine glycan is linked to Asn-276. The next 2 helical transmembrane spans lie at Val-306–Tyr-323 and Val-335–Leu-356. The Extracellular segment spans residues Gly-357–His-452. N-linked (GlcNAc...) asparagine glycans are attached at residues Asn-383 and Asn-394. Transmembrane regions (helical) follow at residues Phe-453–Leu-472, Ile-496–Gln-514, Thr-530–Ile-550, Tyr-571–Met-592, and Val-620–Cys-642. The Cytoplasmic segment spans residues Asn-643–Leu-729. A phosphoserine mark is found at Ser-687, Ser-699, and Ser-701.

Belongs to the sodium:neurotransmitter symporter (SNF) (TC 2.A.22) family. SLC6A15 subfamily. As to expression, significant expressed in brain, lung and kidney. In brain, mainly expressed int the cortex, the cerebellum and the brain stem.

The protein resides in the membrane. It carries out the reaction L-pipecolate(in) + Na(+)(in) = L-pipecolate(out) + Na(+)(out). The enzyme catalyses L-leucine(in) + Na(+)(in) = L-leucine(out) + Na(+)(out). The catalysed reaction is L-isoleucine(in) + Na(+)(in) = L-isoleucine(out) + Na(+)(out). It catalyses the reaction L-methionine(in) + Na(+)(in) = L-methionine(out) + Na(+)(out). It carries out the reaction L-proline(in) + Na(+)(in) = L-proline(out) + Na(+)(out). The enzyme catalyses L-alanine(in) + Na(+)(in) = L-alanine(out) + Na(+)(out). The catalysed reaction is L-asparagine(in) + Na(+)(in) = L-asparagine(out) + Na(+)(out). It catalyses the reaction L-valine(in) + Na(+)(in) = L-valine(out) + Na(+)(out). It carries out the reaction L-cysteine(in) + Na(+)(in) = L-cysteine(out) + Na(+)(out). The enzyme catalyses L-glutamine(in) + Na(+)(in) = L-glutamine(out) + Na(+)(out). The catalysed reaction is L-serine(in) + Na(+)(in) = L-serine(out) + Na(+)(out). It catalyses the reaction L-threonine(in) + Na(+)(in) = L-threonine(out) + Na(+)(out). It carries out the reaction L-phenylalanine(in) + Na(+)(in) = L-phenylalanine(out) + Na(+)(out). Functions as a sodium-dependent neutral amino acid transporter. Exhibits preference for methionine and for the branched-chain amino acids, particularly leucine, valine and isoleucine. Can also transport low-affinity substrates such as alanine, phenylalanine, glutamine and pipecolic acid. Mediates the saturable, pH-sensitive and electrogenic cotransport of proline and sodium ions with a stoichiometry of 1:1. May have a role as transporter for neurotransmitter precursors into neurons. In contrast to other members of the neurotransmitter transporter family, does not appear to be chloride-dependent. This chain is Sodium-dependent neutral amino acid transporter B(0)AT2 (Slc6a15), found in Mus musculus (Mouse).